A 607-amino-acid chain; its full sequence is Guanine nucleotide-binding protein-like 1 (607 aa).

Basic residues predominate over residues 1–14 (MPRKKPFSVKQKKK). The tract at residues 1–81 (MPRKKPFSVK…GPRGYDPNRY (81 aa)) is disordered. The span at 15-26 (QLQDKRERKRGL) shows a compositional bias: basic and acidic residues. Phosphoserine is present on residues Ser32, Ser33, and Ser34. Phosphothreonine occurs at positions 48 and 50. Residues Ser51 and Ser68 each carry the phosphoserine modification. The region spanning 178–418 (WRQLWRVLEM…LCDCPGLIFP (241 aa)) is the CP-type G domain. Residue 225–228 (NKVD) coordinates GTP. Position 324 is a phosphoserine (Ser324). GTP is bound by residues 367–374 (GFPNVGKS) and 411–415 (DCPGL). A disordered region spans residues 547–607 (GPAGDEEEEE…PYALLGEDEC (61 aa)). The span at 550-584 (GDEEEEEEEELSSSCEEEGEEDRDADEEGEGDEDT) shows a compositional bias: acidic residues. 3 positions are modified to phosphoserine: Ser561, Ser562, and Ser563.

The protein belongs to the TRAFAC class YlqF/YawG GTPase family.

Functionally, possible regulatory or functional link with the histocompatibility cluster. In Macaca fascicularis (Crab-eating macaque), this protein is Guanine nucleotide-binding protein-like 1 (GNL1).